A 410-amino-acid polypeptide reads, in one-letter code: MAPFSPASSDVLVIGGGPSGTALSAELAARGLDVQQLAPHPPRPFPATYGAWLGDLPTWARGCAEQVWTDVRAYTGPQPTSLGQPYALLDNAALLRTLRGLADWTWVEGAALHAERSGAGWTVYGAGGERWQTRLVVDASGHGALVSPVRFPGGAALQTAYGVVARFRRPPVTPGSMVWMDYRTPAPELKRGEATFLYAMHLGGDRYFVEETSLIARPAPTRAELRRRLLARLSAQGTPPHATESEEWVAFPMNAQAPAPGGVLAYGAAAGRVHPVSGFQVAGALSDAPGVATAIATALCQGKDAAAAGWAALWSPERRAAREVHLLGVGALLGLERAELPHFFGTFFGLPREQWARFLHPDTDAGTLARTMLRVFAQTGGRVRLPLARAALAQPAASGRALAAAAGLKI.

Residue 11–39 (VLVIGGGPSGTALSAELAARGLDVQQLAP) coordinates NAD(+).

This sequence belongs to the lycopene cyclase family.

This is an uncharacterized protein from Deinococcus radiodurans (strain ATCC 13939 / DSM 20539 / JCM 16871 / CCUG 27074 / LMG 4051 / NBRC 15346 / NCIMB 9279 / VKM B-1422 / R1).